The primary structure comprises 383 residues: Chaperone protein DnaJ (383 aa).

One can recognise a J domain in the interval 5-70 (DYYELLGVEK…QKRAAYDRFG (66 aa)). A CR-type zinc finger spans residues 137-215 (GKTATVKVPS…CGGSGRTRKE (79 aa)). The Zn(2+) site is built by cysteine 150, cysteine 153, cysteine 167, cysteine 170, cysteine 189, cysteine 192, cysteine 203, and cysteine 206. 4 CXXCXGXG motif repeats span residues 150–157 (CEDCKGTG), 167–174 (CSACHGHG), 189–196 (CPTCQGMG), and 203–210 (CRSCGGSG).

It belongs to the DnaJ family. As to quaternary structure, homodimer. The cofactor is Zn(2+).

Its subcellular location is the cytoplasm. Its function is as follows. Participates actively in the response to hyperosmotic and heat shock by preventing the aggregation of stress-denatured proteins and by disaggregating proteins, also in an autonomous, DnaK-independent fashion. Unfolded proteins bind initially to DnaJ; upon interaction with the DnaJ-bound protein, DnaK hydrolyzes its bound ATP, resulting in the formation of a stable complex. GrpE releases ADP from DnaK; ATP binding to DnaK triggers the release of the substrate protein, thus completing the reaction cycle. Several rounds of ATP-dependent interactions between DnaJ, DnaK and GrpE are required for fully efficient folding. Also involved, together with DnaK and GrpE, in the DNA replication of plasmids through activation of initiation proteins. In Paramagnetospirillum magneticum (strain ATCC 700264 / AMB-1) (Magnetospirillum magneticum), this protein is Chaperone protein DnaJ.